Reading from the N-terminus, the 475-residue chain is Adenylyl cyclase-associated protein 1 (475 aa).

A2 bears the N-acetylalanine mark. Y31 is modified (phosphotyrosine). At S34 the chain carries Phosphoserine. K81 is subject to N6-acetyllysine. Disordered regions lie at residues 216–237 (ELSG…PPCP) and 278–319 (MKTH…KKEP). Residues 218–228 (SGLPSGPSAGS) show a composition bias toward low complexity. Position 287 is an N6-methyllysine (K287). 3 positions are modified to phosphoserine: S290, S295, and S301. Residue T307 is modified to Phosphothreonine. Phosphoserine is present on residues S308 and S310. The 135-residue stretch at 319–453 (PAVLELEGKK…EGGDFNEFPV (135 aa)) folds into the C-CAP/cofactor C-like domain. A Glycyl lysine isopeptide (Lys-Gly) (interchain with G-Cter in SUMO1) cross-link involves residue K348.

Belongs to the CAP family. Homodimer. Binds actin monomers.

Its subcellular location is the cell membrane. Functionally, directly regulates filament dynamics and has been implicated in a number of complex developmental and morphological processes, including mRNA localization and the establishment of cell polarity. The protein is Adenylyl cyclase-associated protein 1 (CAP1) of Homo sapiens (Human).